Consider the following 780-residue polypeptide: Subtilisin-like protease SBT1.3 (780 aa).

The signal sequence occupies residues 1–25 (MANKNPLQKPFLFIILSINLIFLQA). Residues 26–120 (ETTTQISTKK…VIPETRYELH (95 aa)) constitute a propeptide, activation peptide. Residues 36–120 (TYVIHMDKSA…VIPETRYELH (85 aa)) enclose the Inhibitor I9 domain. One can recognise a Peptidase S8 domain in the interval 116–628 (RYELHTTRSP…AGHIDPLRAT (513 aa)). Residue aspartate 154 is the Charge relay system of the active site. An N-linked (GlcNAc...) asparagine glycan is attached at asparagine 165. Histidine 227 serves as the catalytic Charge relay system. In terms of domain architecture, PA spans 384-477 (KQYPLVYLGR…GEKEGKLIKQ (94 aa)). Asparagine 394 carries an N-linked (GlcNAc...) asparagine glycan. Residue serine 560 is the Charge relay system of the active site. 2 N-linked (GlcNAc...) asparagine glycosylation sites follow: asparagine 663 and asparagine 731.

The protein belongs to the peptidase S8 family.

Its subcellular location is the secreted. The protein is Subtilisin-like protease SBT1.3 of Arabidopsis thaliana (Mouse-ear cress).